We begin with the raw amino-acid sequence, 191 residues long: Probable DNA-directed RNA polymerase subunit delta (191 aa).

The HTH HARE-type domain maps to L14 to W83. Composition is skewed to acidic residues over residues E119 to N133 and Y143 to D191. A disordered region spans residues E119–D191.

The protein belongs to the RpoE family. In terms of assembly, RNAP is composed of a core of 2 alpha, a beta and a beta' subunits. The core is associated with a delta subunit and one of several sigma factors.

Its function is as follows. Participates in both the initiation and recycling phases of transcription. In the presence of the delta subunit, RNAP displays an increased specificity of transcription, a decreased affinity for nucleic acids, and an increased efficiency of RNA synthesis because of enhanced recycling. The polypeptide is Probable DNA-directed RNA polymerase subunit delta (Streptococcus thermophilus (strain ATCC BAA-491 / LMD-9)).